A 480-amino-acid polypeptide reads, in one-letter code: Glutamate--tRNA ligase (480 aa).

The 'HIGH' region motif lies at 21 to 31 (PSPTGYLHVGG). Cys-110, Cys-112, Cys-137, and His-139 together coordinate Zn(2+). The 'KMSKS' region motif lies at 248-252 (KLSKR). Lys-251 is an ATP binding site.

This sequence belongs to the class-I aminoacyl-tRNA synthetase family. Glutamate--tRNA ligase type 1 subfamily. As to quaternary structure, monomer. Zn(2+) serves as cofactor.

The protein localises to the cytoplasm. It catalyses the reaction tRNA(Glu) + L-glutamate + ATP = L-glutamyl-tRNA(Glu) + AMP + diphosphate. Catalyzes the attachment of glutamate to tRNA(Glu) in a two-step reaction: glutamate is first activated by ATP to form Glu-AMP and then transferred to the acceptor end of tRNA(Glu). This Haemophilus influenzae (strain PittEE) protein is Glutamate--tRNA ligase.